A 294-amino-acid chain; its full sequence is Uracil-DNA glycosylase (294 aa).

Asp-139 functions as the Proton acceptor in the catalytic mechanism.

Belongs to the uracil-DNA glycosylase (UDG) superfamily. UNG family.

It is found in the host nucleus. The enzyme catalyses Hydrolyzes single-stranded DNA or mismatched double-stranded DNA and polynucleotides, releasing free uracil.. Its function is as follows. Excises uracil residues from the DNA which can arise as a result of misincorporation of dUMP residues by DNA polymerase or deamination of cytosines. Therefore may reduce deleterious uracil incorporation into the viral genome, particularly in terminally differentiated cells which lack DNA repair enzymes. The polypeptide is Uracil-DNA glycosylase (UL2) (Human herpesvirus 2 (strain 333) (HHV-2)).